The chain runs to 485 residues: GTPase Obg (485 aa).

The region spanning Pro-2–Val-159 is the Obg domain. The OBG-type G domain occupies Ala-160 to Arg-341. GTP-binding positions include Gly-166–Ser-173, Phe-191–Val-195, Asp-212–Gly-215, Asn-292–Asp-295, and Ser-322–Val-324. Mg(2+)-binding residues include Ser-173 and Thr-193. The 79-residue stretch at Pro-359–Pro-437 folds into the OCT domain. Positions Thr-439–Glu-485 are disordered. Basic and acidic residues predominate over residues Thr-452–Lys-468.

The protein belongs to the TRAFAC class OBG-HflX-like GTPase superfamily. OBG GTPase family. As to quaternary structure, monomer. Requires Mg(2+) as cofactor.

It is found in the cytoplasm. In terms of biological role, an essential GTPase which binds GTP, GDP and possibly (p)ppGpp with moderate affinity, with high nucleotide exchange rates and a fairly low GTP hydrolysis rate. Plays a role in control of the cell cycle, stress response, ribosome biogenesis and in those bacteria that undergo differentiation, in morphogenesis control. The protein is GTPase Obg of Mycobacterium sp. (strain MCS).